Here is a 238-residue protein sequence, read N- to C-terminus: Ribonuclease PH (238 aa).

Phosphate contacts are provided by residues R86 and 124-126 (GTR).

The protein belongs to the RNase PH family. Homohexameric ring arranged as a trimer of dimers.

It catalyses the reaction tRNA(n+1) + phosphate = tRNA(n) + a ribonucleoside 5'-diphosphate. Phosphorolytic 3'-5' exoribonuclease that plays an important role in tRNA 3'-end maturation. Removes nucleotide residues following the 3'-CCA terminus of tRNAs; can also add nucleotides to the ends of RNA molecules by using nucleoside diphosphates as substrates, but this may not be physiologically important. Probably plays a role in initiation of 16S rRNA degradation (leading to ribosome degradation) during starvation. This chain is Ribonuclease PH, found in Yersinia pseudotuberculosis serotype O:1b (strain IP 31758).